We begin with the raw amino-acid sequence, 288 residues long: Acetylglutamate kinase (288 aa).

Residues 66–67 (GG), arginine 88, and asparagine 182 each bind substrate.

It belongs to the acetylglutamate kinase family. ArgB subfamily.

The protein resides in the cytoplasm. The catalysed reaction is N-acetyl-L-glutamate + ATP = N-acetyl-L-glutamyl 5-phosphate + ADP. The protein operates within amino-acid biosynthesis; L-arginine biosynthesis; N(2)-acetyl-L-ornithine from L-glutamate: step 2/4. Functionally, catalyzes the ATP-dependent phosphorylation of N-acetyl-L-glutamate. This is Acetylglutamate kinase from Brachyspira hyodysenteriae (strain ATCC 49526 / WA1).